We begin with the raw amino-acid sequence, 614 residues long: Leucine aminopeptidase 2 (614 aa).

A peptide contacts are provided by residues 139–141 and 271–276; these read QCQ and PYGGME. His300 serves as a coordination point for Zn(2+). Residue Glu301 is the Proton acceptor of the active site. Residues His304 and Glu323 each coordinate Zn(2+). Tyr385 functions as the Proton donor in the catalytic mechanism.

Belongs to the peptidase M1 family. Requires Zn(2+) as cofactor.

Its subcellular location is the cytoplasm. It is found in the nucleus. The catalysed reaction is an epoxide + H2O = an ethanediol. Aminopeptidase that preferentially cleaves di- and tripeptides. Also has low epoxide hydrolase activity (in vitro). Can hydrolyze the epoxide leukotriene LTA(4) but it forms preferentially 5,6-dihydroxy-7,9,11,14-eicosatetraenoic acid rather than the cytokine leukotriene B(4) as the product compared to the homologous mammalian enzyme (in vitro). The chain is Leucine aminopeptidase 2 from Aspergillus fumigatus (strain ATCC MYA-4609 / CBS 101355 / FGSC A1100 / Af293) (Neosartorya fumigata).